Here is a 416-residue protein sequence, read N- to C-terminus: Glutamyl-tRNA reductase (416 aa).

Residues 51–54 (TCNR), serine 110, 115–117 (EPQ), and glutamine 121 contribute to the substrate site. Cysteine 52 acts as the Nucleophile in catalysis. An NADP(+)-binding site is contributed by 190 to 195 (GAGQTG).

Belongs to the glutamyl-tRNA reductase family. As to quaternary structure, homodimer.

The enzyme catalyses (S)-4-amino-5-oxopentanoate + tRNA(Glu) + NADP(+) = L-glutamyl-tRNA(Glu) + NADPH + H(+). It functions in the pathway porphyrin-containing compound metabolism; protoporphyrin-IX biosynthesis; 5-aminolevulinate from L-glutamyl-tRNA(Glu): step 1/2. Functionally, catalyzes the NADPH-dependent reduction of glutamyl-tRNA(Glu) to glutamate 1-semialdehyde (GSA). This is Glutamyl-tRNA reductase from Francisella tularensis subsp. holarctica (strain OSU18).